The primary structure comprises 1192 residues: DNA topoisomerase 2 (1192 aa).

Residues Asn-64, Asn-95, and 142-149 contribute to the ATP site; that span reads GTNGVGLK. Glu-438, Asp-539, and Asp-541 together coordinate Mg(2+). One can recognise a Topo IIA-type catalytic domain in the interval 707-1174; the sequence is IPNFLDGMTR…PGASVWLEEI (468 aa). Residue Tyr-800 is the O-(5'-phospho-DNA)-tyrosine intermediate of the active site.

The protein belongs to the type II topoisomerase family. Requires Mg(2+) as cofactor. Mn(2+) is required as a cofactor. The cofactor is Ca(2+).

The protein localises to the host cytoplasm. The enzyme catalyses ATP-dependent breakage, passage and rejoining of double-stranded DNA.. In terms of biological role, type II topoisomerase. Processively relaxes supercoiled DNA. Displays DNA-supercoiling activity only when associated with the viral histone-like protein. The polypeptide is DNA topoisomerase 2 (Ornithodoros (relapsing fever ticks)).